Consider the following 265-residue polypeptide: Uronate dehydrogenase (265 aa).

Residues 12 to 13, 32 to 34, 49 to 50, and 69 to 73 contribute to the NAD(+) site; these read QL, DLS, DL, and LGGIS. Substrate contacts are provided by residues serine 73 and 109–111; that span reads SNH. Catalysis depends on tyrosine 134, which acts as the Proton acceptor. Position 138 (lysine 138) interacts with NAD(+). Serine 163 provides a ligand contact to substrate. Residue cysteine 164 coordinates NAD(+). Arginine 172 is a binding site for substrate.

The protein belongs to the NAD(P)-dependent epimerase/dehydratase family. Homohexamer.

The enzyme catalyses beta-D-galacturonate + NAD(+) = D-galactaro-1,5-lactone + NADH + H(+). The catalysed reaction is beta-D-glucuronate + NAD(+) = D-glucaro-1,5-lactone + NADH + H(+). Its pathway is carbohydrate acid metabolism; D-galacturonate degradation via prokaryotic oxidative pathway. Catalyzes the oxidation of D-galacturonate and D-glucuronate to galactarate and D-glucarate, respectively. In fact, in water solution the substrate D-galacturonate is predominantly in pyranosic form whose beta anomer is converted by the enzyme to D-galactaro-1,5-lactone; in solution, this reaction product rearranges to the more stable D-galactaro-1,4-lactone. Makes part of the oxidative degradation pathway of D-galacturonate, which allows A.tumefaciens to utilize D-galacturonate as a sole carbon source. Cannot use NADP(+) instead of NAD(+) as cosubstrate. Is not active on D-galactose, D-glucose, D-galactonate and D-gluconate. The protein is Uronate dehydrogenase (udh) of Agrobacterium fabrum (strain C58 / ATCC 33970) (Agrobacterium tumefaciens (strain C58)).